A 255-amino-acid polypeptide reads, in one-letter code: Electron transfer flavoprotein subunit beta (255 aa).

Ala-2 bears the N-acetylalanine mark. AMP is bound by residues Ala-9, 39-42 (NPFC), Cys-66, and 123-134 (GKQAIDDDCNQT). The recognition loop stretch occupies residues 183-205 (ADLRLNEPRYATLPNIMKAKKKK). An N6,N6,N6-trimethyllysine; by ETFBKMT; alternate modification is found at Lys-200. The residue at position 200 (Lys-200) is an N6-acetyllysine; alternate. Lys-200 is modified (N6-methyllysine; alternate). Position 203 is an N6,N6,N6-trimethyllysine; by ETFBKMT (Lys-203). At Lys-210 the chain carries N6-acetyllysine; alternate. Lys-210 bears the N6-succinyllysine; alternate mark. Phosphoserine occurs at positions 223 and 226. Lys-238 carries the N6-acetyllysine modification. Lys-248 carries the N6-acetyllysine; alternate modification. Residue Lys-248 is modified to N6-succinyllysine; alternate.

Belongs to the ETF beta-subunit/FixA family. In terms of assembly, heterodimer composed of ETFA and ETFB. Identified in a complex that contains ETFA, ETFB and ETFRF1. Interacts with ACADM. In terms of processing, methylated. Trimethylation at Lys-200 and Lys-203 may negatively regulate the activity in electron transfer from acyl-CoA dehydrogenases.

Its subcellular location is the mitochondrion matrix. In terms of biological role, heterodimeric electron transfer flavoprotein that accepts electrons from several mitochondrial dehydrogenases, including acyl-CoA dehydrogenases, glutaryl-CoA and sarcosine dehydrogenase. It transfers the electrons to the main mitochondrial respiratory chain via ETF-ubiquinone oxidoreductase. Required for normal mitochondrial fatty acid oxidation and normal amino acid metabolism. ETFB binds an AMP molecule that probably has a purely structural role. This chain is Electron transfer flavoprotein subunit beta, found in Sus scrofa (Pig).